The sequence spans 1065 residues: Putative guanine nucleotide-exchange factor SED4 (1065 aa).

Residues 1-346 (MSGNSANYDV…SSSILRNIWK (346 aa)) lie on the Cytoplasmic side of the membrane. Serine 65 is subject to Phosphoserine. WD repeat units follow at residues 259 to 298 (FDLNGITSMDVSPNKKFVALSSNDNLVAIVSVEKLKLVQL) and 302 to 341 (VHESTITKVTFSPDSRYLASTSMGNTINVLKLSGTSSSIL). A helical; Signal-anchor for type II membrane protein membrane pass occupies residues 347 to 365 (FFLNFVLLVVLAGAIQLGY). Topologically, residues 366–1065 (KHNVHGFIYK…VNYAGLHDEL (700 aa)) are lumenal. An N-linked (GlcNAc...) asparagine glycan is attached at asparagine 388. Disordered regions lie at residues 458–477 (TSADIPTSASSSSSSSSSSF), 482–520 (VTNEPIVSSPTSEITKPLASPTEPNIVEKPSLPLNSESI), and 551–625 (QSES…SFLD). Positions 465–476 (SASSSSSSSSSS) are enriched in low complexity. Over residues 482–495 (VTNEPIVSSPTSEI) the composition is skewed to polar residues. Low complexity predominate over residues 568-621 (STESPSLSHMPSSSSSSLSLSSSLTTSPTTALSTSTATAVTTTQTNPTNDAANT). A glycan (N-linked (GlcNAc...) asparagine) is linked at asparagine 620. Tandem repeats lie at residues 824–833 (IDNSEYTSVL), 834–843 (ADNLEPTSVL), 844–853 (ADNSEPTSVL), and 854–863 (ADSSEPTSVF). The interval 824 to 863 (IDNSEYTSVLADNLEPTSVLADNSEPTSVLADSSEPTSVF) is 4 X 10 AA tandem repeats. N-linked (GlcNAc...) asparagine glycosylation is present at asparagine 1039. Positions 1062–1065 (HDEL) match the Prevents secretion from ER motif.

It belongs to the WD repeat SEC12 family.

The protein resides in the endoplasmic reticulum membrane. It is found in the golgi apparatus membrane. Putative guanine nucleotide-exchange factor (GEF) involved in the formation or budding of transport vesicles from the ER. Positive regulator of SAR1 probably through inhibition of the GTPase activation by SEC23. The protein is Putative guanine nucleotide-exchange factor SED4 (SED4) of Saccharomyces cerevisiae (strain ATCC 204508 / S288c) (Baker's yeast).